The sequence spans 226 residues: UPF0173 metal-dependent hydrolase GWCH70_2696 (226 aa).

It belongs to the UPF0173 family.

In Geobacillus sp. (strain WCH70), this protein is UPF0173 metal-dependent hydrolase GWCH70_2696.